The following is a 188-amino-acid chain: GMP synthase [glutamine-hydrolyzing] subunit A (188 aa).

In terms of domain architecture, Glutamine amidotransferase type-1 spans 2–188 (KIAVIYFGGQ…FKNFIEACKK (187 aa)). The Nucleophile role is filled by Cys-79. Catalysis depends on residues His-166 and Glu-168.

Heterodimer composed of a glutamine amidotransferase subunit (A) and a GMP-binding subunit (B).

It catalyses the reaction XMP + L-glutamine + ATP + H2O = GMP + L-glutamate + AMP + diphosphate + 2 H(+). Its pathway is purine metabolism; GMP biosynthesis; GMP from XMP (L-Gln route): step 1/1. Functionally, catalyzes the synthesis of GMP from XMP. The sequence is that of GMP synthase [glutamine-hydrolyzing] subunit A from Sulfurisphaera tokodaii (strain DSM 16993 / JCM 10545 / NBRC 100140 / 7) (Sulfolobus tokodaii).